A 151-amino-acid chain; its full sequence is FIS1-related protein fis-2 (151 aa).

A helical transmembrane segment spans residues 126–146 (LIGAAIVGGGALALAGLVAIF).

Belongs to the FIS1 family.

The protein localises to the mitochondrion outer membrane. It localises to the peroxisome membrane. The protein resides in the mitochondrion. Its function is as follows. Involved in the fragmentation of the mitochondrial network. Involved in perinuclear clustering of the mitochondrial network. May act, redundantly with fis-1, downstream of mitochondrial fission, before the fission products participate in mitochondrial homeostasis, mitophagy, or apoptosis. Plays a role in apoptosis by promoting mitochondrial elimination and cell-death execution, acting downstream of caspase ced-3, and perhaps independently of dynamin GTPase drp-1, caspase ced-9 and apoptosis-inducing factor AIFM/wah-1. The polypeptide is FIS1-related protein fis-2 (Caenorhabditis elegans).